The primary structure comprises 361 residues: Histidinol-phosphate aminotransferase (361 aa).

Lys221 is subject to N6-(pyridoxal phosphate)lysine.

The protein belongs to the class-II pyridoxal-phosphate-dependent aminotransferase family. Histidinol-phosphate aminotransferase subfamily. The cofactor is pyridoxal 5'-phosphate.

The catalysed reaction is L-histidinol phosphate + 2-oxoglutarate = 3-(imidazol-4-yl)-2-oxopropyl phosphate + L-glutamate. Its pathway is amino-acid biosynthesis; L-histidine biosynthesis; L-histidine from 5-phospho-alpha-D-ribose 1-diphosphate: step 7/9. This is Histidinol-phosphate aminotransferase from Methanocella arvoryzae (strain DSM 22066 / NBRC 105507 / MRE50).